The following is a 162-amino-acid chain: Ribosomal RNA large subunit methyltransferase H (162 aa).

S-adenosyl-L-methionine is bound by residues leucine 78, glycine 109, and 128 to 133 (LSALTL).

This sequence belongs to the RNA methyltransferase RlmH family. In terms of assembly, homodimer.

The protein localises to the cytoplasm. The enzyme catalyses pseudouridine(1915) in 23S rRNA + S-adenosyl-L-methionine = N(3)-methylpseudouridine(1915) in 23S rRNA + S-adenosyl-L-homocysteine + H(+). In terms of biological role, specifically methylates the pseudouridine at position 1915 (m3Psi1915) in 23S rRNA. The chain is Ribosomal RNA large subunit methyltransferase H from Psychrobacter arcticus (strain DSM 17307 / VKM B-2377 / 273-4).